Here is a 144-residue protein sequence, read N- to C-terminus: Large ribosomal subunit protein uL13 (144 aa).

The protein belongs to the universal ribosomal protein uL13 family. Part of the 50S ribosomal subunit.

Functionally, this protein is one of the early assembly proteins of the 50S ribosomal subunit, although it is not seen to bind rRNA by itself. It is important during the early stages of 50S assembly. The polypeptide is Large ribosomal subunit protein uL13 (Syntrophomonas wolfei subsp. wolfei (strain DSM 2245B / Goettingen)).